The chain runs to 450 residues: Ceramide glucosyltransferase (450 aa).

Residues 1 to 8 (MSDSGTLS) lie on the Lumenal side of the membrane. The chain crosses the membrane as a helical span at residues 9–29 (LIGGIVFLVLWVVVWSICLLG). Residues 30–337 (WRTARIRYAH…IRVRKKMTLA (308 aa)) lie on the Cytoplasmic side of the membrane. Position 96 (D96) is a short sequence motif, D1. D148 is a short sequence motif (D2). Residue D286 is a short sequence motif, D3. Catalysis depends on D286, which acts as the Proton acceptor. A (Q/R)XXRW motif is present at residues 323 to 327 (RRVRW). Residues 338–358 (ATLLEPLTESIISGLYGAWAI) form a helical membrane-spanning segment. Residues 359–361 (SRL) lie on the Lumenal side of the membrane. A helical transmembrane segment spans residues 362–382 (LGGNILPLFLLHMAAWISVDI). Over 383–401 (STKRALETNIKGIGPPESK) the chain is Cytoplasmic. The helical transmembrane segment at 402–422 (VTFLMAWAARECLALPIWMLA) threads the bilayer. Over 423 to 450 (MTSSEVVWRGQKYKIIASGEAIRLGDRN) the chain is Lumenal.

The protein belongs to the glycosyltransferase 2 family.

It localises to the golgi apparatus membrane. It catalyses the reaction an N-acylsphing-4-enine + UDP-alpha-D-glucose = a beta-D-glucosyl-(1&lt;-&gt;1')-N-acylsphing-4-enine + UDP + H(+). It functions in the pathway lipid metabolism; sphingolipid metabolism. In terms of biological role, catalyzes the final step in the biosynthesis of the membrane lipid glucosylceramide (GluCer), the transfer of glucose to ceramide. Glucosylceramides play important roles in growth, differentiation and pathogenicity. Essential factor in determining the success of fungal infection by regulating survival of yeast cells during the initial colonization of the host lung. The chain is Ceramide glucosyltransferase from Cryptococcus neoformans var. grubii serotype A (strain H99 / ATCC 208821 / CBS 10515 / FGSC 9487) (Filobasidiella neoformans var. grubii).